The following is a 187-amino-acid chain: UPF0301 protein YqgE (187 aa).

This sequence belongs to the UPF0301 (AlgH) family.

In Escherichia coli O127:H6 (strain E2348/69 / EPEC), this protein is UPF0301 protein YqgE.